A 1221-amino-acid chain; its full sequence is Probable serine/threonine-protein kinase DDB_G0286465 (1221 aa).

3 disordered regions span residues 1–37 (MTLRLDTSLKRGASRNIPPIPTFSSVSNENLSSSPYT), 104–133 (FSPSTGRTKNNNNNNNNNINNNNYKKNDNQ), and 173–263 (ENNS…NNNE). Low complexity-rich tracts occupy residues 24–37 (SSVSNENLSSSPYT), 112–127 (KNNNNNNNNNINNNNY), 173–192 (ENNSQNNNNNKYQINNNMQK), and 204–263 (NNNN…NNNE). A Protein kinase domain is found at 186 to 627 (INNNMQKTGG…PYKLLDHPFF (442 aa)). Residue 192–200 (KTGGRNGSV) participates in ATP binding. Lys271 is a binding site for ATP. Residues 324–344 (NVNNNNSNNNNNNSNNNITNS) are compositionally biased toward low complexity. The disordered stretch occupies residues 324–346 (NVNNNNSNNNNNNSNNNITNSRY). Asp448 (proton acceptor) is an active-site residue. Composition is skewed to low complexity over residues 538 to 550 (SPSSSSTTSTSTS) and 559 to 584 (DSSSSASSSSSSSSSSSSSSSSSLPK). Disordered regions lie at residues 538–604 (SPSS…PEKR), 712–782 (PNLS…KEKL), 823–858 (KFEKKQRQIQDSEKVNKNEEENQTKDDADNISPPLP), 959–1008 (KENI…SYCN), and 1105–1152 (KKQE…QQEK). Over residues 591–604 (RSKDNQSKLDPEKR) the composition is skewed to basic and acidic residues. The segment covering 725–738 (KKQLQQYQQQQKQQ) has biased composition (low complexity). The segment covering 746-756 (DDEEEKEEEEK) has biased composition (acidic residues). Composition is skewed to basic and acidic residues over residues 757 to 769 (EKEKEKEKEKEKE) and 823 to 850 (KFEKKQRQIQDSEKVNKNEEENQTKDDA). Residues 959–993 (KENIINFHNNNNNNNNNNNNNNNNNNNNNNNNNNN) show a composition bias toward low complexity.

Belongs to the protein kinase superfamily. Ser/Thr protein kinase family.

It carries out the reaction L-seryl-[protein] + ATP = O-phospho-L-seryl-[protein] + ADP + H(+). It catalyses the reaction L-threonyl-[protein] + ATP = O-phospho-L-threonyl-[protein] + ADP + H(+). The chain is Probable serine/threonine-protein kinase DDB_G0286465 from Dictyostelium discoideum (Social amoeba).